A 295-amino-acid polypeptide reads, in one-letter code: HTH-type transcriptional regulator TfdS (295 aa).

The region spanning 1–58 (MEFRQLRYFVAAAEEGNVGAAARRLHISQPPVTRQIHALEQHLGVLLFERSARGVQLT) is the HTH lysR-type domain. The segment at residues 18–37 (VGAAARRLHISQPPVTRQIH) is a DNA-binding region (H-T-H motif).

Belongs to the LysR transcriptional regulatory family.

Its subcellular location is the cytoplasm. In terms of biological role, involved in the regulation of 3-chlorocatechol degradation. Transcriptional regulator of tfdB expression. Acts as a repressor in the absence of its effector (either 2-cis-chlorodiene lactone or chloromaleylacetate) but acts as an activator when its effector is present. In Cupriavidus pinatubonensis (strain JMP 134 / LMG 1197) (Cupriavidus necator (strain JMP 134)), this protein is HTH-type transcriptional regulator TfdS (tfdS).